We begin with the raw amino-acid sequence, 194 residues long: Putative NAD(P)H nitroreductase YfhC (194 aa).

Residues Arg20–Ser22, Lys147–Ile148, and Arg188 contribute to the FMN site.

Belongs to the nitroreductase family. FMN serves as cofactor.

The chain is Putative NAD(P)H nitroreductase YfhC (yfhC) from Bacillus subtilis (strain 168).